Consider the following 624-residue polypeptide: Probable potassium transport system protein Kup (624 aa).

The next 12 helical transmembrane spans lie at A16–Y36, I59–V79, F106–P126, F147–T167, F174–I194, L211–T231, W252–I272, I292–G312, I342–F362, A371–V391, T394–A414, and T418–M438.

The protein belongs to the HAK/KUP transporter (TC 2.A.72) family.

It is found in the cell membrane. It carries out the reaction K(+)(in) + H(+)(in) = K(+)(out) + H(+)(out). In terms of biological role, transport of potassium into the cell. Likely operates as a K(+):H(+) symporter. This chain is Probable potassium transport system protein Kup, found in Corynebacterium glutamicum (strain ATCC 13032 / DSM 20300 / JCM 1318 / BCRC 11384 / CCUG 27702 / LMG 3730 / NBRC 12168 / NCIMB 10025 / NRRL B-2784 / 534).